The following is a 254-amino-acid chain: 3-deoxy-manno-octulosonate cytidylyltransferase (254 aa).

Belongs to the KdsB family.

It localises to the cytoplasm. The catalysed reaction is 3-deoxy-alpha-D-manno-oct-2-ulosonate + CTP = CMP-3-deoxy-beta-D-manno-octulosonate + diphosphate. The protein operates within nucleotide-sugar biosynthesis; CMP-3-deoxy-D-manno-octulosonate biosynthesis; CMP-3-deoxy-D-manno-octulosonate from 3-deoxy-D-manno-octulosonate and CTP: step 1/1. It participates in bacterial outer membrane biogenesis; lipopolysaccharide biosynthesis. In terms of biological role, activates KDO (a required 8-carbon sugar) for incorporation into bacterial lipopolysaccharide in Gram-negative bacteria. The polypeptide is 3-deoxy-manno-octulosonate cytidylyltransferase (Pseudomonas putida (strain GB-1)).